A 138-amino-acid polypeptide reads, in one-letter code: Small ribosomal subunit protein uS8c (138 aa).

The protein belongs to the universal ribosomal protein uS8 family. As to quaternary structure, part of the 30S ribosomal subunit.

It is found in the plastid. The protein localises to the chloroplast. Functionally, one of the primary rRNA binding proteins, it binds directly to 16S rRNA central domain where it helps coordinate assembly of the platform of the 30S subunit. The chain is Small ribosomal subunit protein uS8c (rps8) from Chlorella vulgaris (Green alga).